Consider the following 491-residue polypeptide: Ketol-acid reductoisomerase (NADP(+)) (491 aa).

In terms of domain architecture, KARI N-terminal Rossmann spans 15-208 (AQLGKCRFMG…GGHRAGVLES (194 aa)). Residues 45–48 (CGAQ), Arg-68, Arg-76, Ser-78, and 108–110 (DKQ) each bind NADP(+). His-132 is a catalytic residue. NADP(+) is bound at residue Gly-158. KARI C-terminal knotted domains follow at residues 209–344 (SFVA…TAPQ) and 345–484 (YEGK…MTDM). Mg(2+)-binding residues include Asp-217, Glu-221, Glu-389, and Glu-393. Ser-414 lines the substrate pocket.

This sequence belongs to the ketol-acid reductoisomerase family. Requires Mg(2+) as cofactor.

It carries out the reaction (2R)-2,3-dihydroxy-3-methylbutanoate + NADP(+) = (2S)-2-acetolactate + NADPH + H(+). It catalyses the reaction (2R,3R)-2,3-dihydroxy-3-methylpentanoate + NADP(+) = (S)-2-ethyl-2-hydroxy-3-oxobutanoate + NADPH + H(+). The protein operates within amino-acid biosynthesis; L-isoleucine biosynthesis; L-isoleucine from 2-oxobutanoate: step 2/4. It participates in amino-acid biosynthesis; L-valine biosynthesis; L-valine from pyruvate: step 2/4. Its function is as follows. Involved in the biosynthesis of branched-chain amino acids (BCAA). Catalyzes an alkyl-migration followed by a ketol-acid reduction of (S)-2-acetolactate (S2AL) to yield (R)-2,3-dihydroxy-isovalerate. In the isomerase reaction, S2AL is rearranged via a Mg-dependent methyl migration to produce 3-hydroxy-3-methyl-2-ketobutyrate (HMKB). In the reductase reaction, this 2-ketoacid undergoes a metal-dependent reduction by NADPH to yield (R)-2,3-dihydroxy-isovalerate. The protein is Ketol-acid reductoisomerase (NADP(+)) of Escherichia coli O8 (strain IAI1).